A 525-amino-acid chain; its full sequence is Bifunctional purine biosynthesis protein PurH (525 aa).

In terms of domain architecture, MGS-like spans 1 to 147 (MTKIERALIS…KNWAHVAIVT (147 aa)).

The protein belongs to the PurH family.

The enzyme catalyses (6R)-10-formyltetrahydrofolate + 5-amino-1-(5-phospho-beta-D-ribosyl)imidazole-4-carboxamide = 5-formamido-1-(5-phospho-D-ribosyl)imidazole-4-carboxamide + (6S)-5,6,7,8-tetrahydrofolate. It catalyses the reaction IMP + H2O = 5-formamido-1-(5-phospho-D-ribosyl)imidazole-4-carboxamide. The protein operates within purine metabolism; IMP biosynthesis via de novo pathway; 5-formamido-1-(5-phospho-D-ribosyl)imidazole-4-carboxamide from 5-amino-1-(5-phospho-D-ribosyl)imidazole-4-carboxamide (10-formyl THF route): step 1/1. Its pathway is purine metabolism; IMP biosynthesis via de novo pathway; IMP from 5-formamido-1-(5-phospho-D-ribosyl)imidazole-4-carboxamide: step 1/1. This Chromobacterium violaceum (strain ATCC 12472 / DSM 30191 / JCM 1249 / CCUG 213 / NBRC 12614 / NCIMB 9131 / NCTC 9757 / MK) protein is Bifunctional purine biosynthesis protein PurH.